A 245-amino-acid chain; its full sequence is Probable septum site-determining protein MinC (245 aa).

The segment covering 113-132 has biased composition (basic and acidic residues); it reads RERPLEPLVGEEKKKPEKPP. The segment at 113-138 is disordered; that stretch reads RERPLEPLVGEEKKKPEKPPEPTIKP.

The protein belongs to the MinC family. In terms of assembly, interacts with MinD and FtsZ.

Its function is as follows. Cell division inhibitor that blocks the formation of polar Z ring septums. Rapidly oscillates between the poles of the cell to destabilize FtsZ filaments that have formed before they mature into polar Z rings. Prevents FtsZ polymerization. The sequence is that of Probable septum site-determining protein MinC from Pseudomonas fluorescens (strain SBW25).